Reading from the N-terminus, the 398-residue chain is Cysteine protease ATG4A (398 aa).

Residue cysteine 77 is the Nucleophile of the active site. Active-site residues include aspartate 279 and histidine 281. The LIR motif lies at phenylalanine 393–leucine 396.

It belongs to the peptidase C54 family. Interacts with ATG9A; the interaction is direct.

Its subcellular location is the cytoplasm. The enzyme catalyses [protein]-C-terminal L-amino acid-glycyl-phosphatidylethanolamide + H2O = [protein]-C-terminal L-amino acid-glycine + a 1,2-diacyl-sn-glycero-3-phosphoethanolamine. Its activity is regulated as follows. Inhibited by N-ethylmaleimide. Redox-regulated during autophagy since reducing conditions activate ATG4A whereas an oxidizing environment such as the presence of H(2)O(2) inhibits its activity. Cysteine protease that plays a key role in autophagy by mediating both proteolytic activation and delipidation of ATG8 family proteins. The protease activity is required for proteolytic activation of ATG8 family proteins: cleaves the C-terminal amino acid of ATG8 proteins to reveal a C-terminal glycine. Exposure of the glycine at the C-terminus is essential for ATG8 proteins conjugation to phosphatidylethanolamine (PE) and insertion to membranes, which is necessary for autophagy. Preferred substrate is GABARAPL2 followed by MAP1LC3A and GABARAP. Protease activity is also required to counteract formation of high-molecular weight conjugates of ATG8 proteins (ATG8ylation): acts as a deubiquitinating-like enzyme that removes ATG8 conjugated to other proteins, such as ATG3. In addition to the protease activity, also mediates delipidation of ATG8 family proteins. Catalyzes delipidation of PE-conjugated forms of ATG8 proteins during macroautophagy. Compared to ATG4B, the major protein for proteolytic activation of ATG8 proteins, shows weaker ability to cleave the C-terminal amino acid of ATG8 proteins, while it displays stronger delipidation activity. Involved in phagophore growth during mitophagy independently of its protease activity and of ATG8 proteins: acts by regulating ATG9A trafficking to mitochondria and promoting phagophore-endoplasmic reticulum contacts during the lipid transfer phase of mitophagy. The sequence is that of Cysteine protease ATG4A from Pongo abelii (Sumatran orangutan).